Consider the following 204-residue polypeptide: Glideosome-associated protein 45 (204 aa).

The tract at residues 1-86 (MGNKCSRSKV…KEEIDYATQE (86 aa)) is disordered. A lipid anchor (N-myristoyl glycine) is attached at Gly2. The tract at residues 2 to 29 (GNKCSRSKVKEPKRKDIDELAERENLKK) is targets GAP45 to the cell membrane; however, dispensable for the formation of the glideosome complex and the association with the inner membrane complex. Over residues 9 to 53 (KVKEPKRKDIDELAERENLKKQSEEIIEEKPEEVVEQVEETHEEP) the composition is skewed to basic and acidic residues. The segment covering 54–73 (LEQEQELDEQKIEEEEEEPE) has biased composition (acidic residues). Ser89 is subject to Phosphoserine; by CPK10. Ser103 is subject to Phosphoserine; by CPK10 and PKB. The residue at position 149 (Ser149) is a Phosphoserine; by CPK10.

As to quaternary structure, component of the glideosome complex composed of GAP50, GAP45, MTIP and MyoA; the complex is formed during the late schizont stage and in merozoites. MyoA, MTIP and GAP45 probably form an initial complex in the cytoplasm which is then recruited to the outer face of the inner membrane complex via the interaction with GAP50. Interacts with GAP50; the interaction is independent of GAP45 phosphorylation status and can also occur independently of the formation of the glideosome complex. In terms of processing, phosphorylated at multiple sites. Phosphorylation increases during the schizont stage and peaks in segmented merozoites. May be phosphorylated by PKB. In schizonts, phosphorylated at Ser-89 and Ser-149 in response to phospholipase C-mediated calcium release. Phosphorylation at Ser-149 begins in early schizonts while phosphorylation at Ser-103 begins in late schizonts. Phosphorylation at Ser-89, Ser-103 and Ser-149 appears to be dispensable for GAP45 inner membrane complex localization or GAP45 inclusion in the glideosome complex. Phosphorylation is not required for interaction with GAP50; however, it may regulate the interaction with MTIP and MyoA. N-myristoylated by NMT. N-myristoylation may contribute to the targeting of GAP45 to the inner membrane complex with the subsequent palmitoylation strengthening the interaction with the membrane. Post-translationally, palmitoylated. Palmitoylation appears to follow N-myristoylation and may strengthen the interaction with the inner membrane complex.

The protein resides in the inner membrane complex. Functionally, component of the glideosome complex, an inner membrane complex structure involved in parasite gliding motility and host cell invasion. During the asexual blood stage, required in schizonts to recruit MTIP and MyoA to the inner membrane complex where they assemble with GAP50 to form the glideosome complex. By regulating the formation of the glideosome, plays an essential role during merozoite invasion of host erythrocytes. The polypeptide is Glideosome-associated protein 45 (Plasmodium falciparum (isolate 3D7)).